Consider the following 182-residue polypeptide: uncharacterized protein (182 aa).

The tract at residues Leu-40–Asn-182 is disordered. The span at Asn-52–Asp-86 shows a compositional bias: low complexity. Positions Asn-87–Asp-100 are enriched in acidic residues. 2 stretches are compositionally biased toward low complexity: residues Asn-104–Asn-134 and Asp-148–Asn-157. A compositionally biased stretch (basic and acidic residues) spans Phe-165 to Asn-182.

This is an uncharacterized protein from Dictyostelium discoideum (Social amoeba).